The chain runs to 597 residues: Adenine deaminase 2 (597 aa).

It belongs to the metallo-dependent hydrolases superfamily. Adenine deaminase family. Mn(2+) is required as a cofactor.

The enzyme catalyses adenine + H2O + H(+) = hypoxanthine + NH4(+). The chain is Adenine deaminase 2 from Agrobacterium fabrum (strain C58 / ATCC 33970) (Agrobacterium tumefaciens (strain C58)).